Consider the following 281-residue polypeptide: Shikimate dehydrogenase (NADP(+)) (281 aa).

Residues 15-17 and Thr62 each bind shikimate; that span reads SKS. Residue Lys66 is the Proton acceptor of the active site. Asn87 and Asp102 together coordinate shikimate. NADP(+) is bound by residues 127 to 131, 151 to 156, and Leu217; these read GAGGS and NRTPER. Tyr219 contributes to the shikimate binding site. Gly241 contacts NADP(+).

The protein belongs to the shikimate dehydrogenase family. As to quaternary structure, homodimer.

It catalyses the reaction shikimate + NADP(+) = 3-dehydroshikimate + NADPH + H(+). Its pathway is metabolic intermediate biosynthesis; chorismate biosynthesis; chorismate from D-erythrose 4-phosphate and phosphoenolpyruvate: step 4/7. In terms of biological role, involved in the biosynthesis of the chorismate, which leads to the biosynthesis of aromatic amino acids. Catalyzes the reversible NADPH linked reduction of 3-dehydroshikimate (DHSA) to yield shikimate (SA). The chain is Shikimate dehydrogenase (NADP(+)) from Stenotrophomonas maltophilia (strain K279a).